We begin with the raw amino-acid sequence, 130 residues long: Phosphoribosyl-AMP cyclohydrolase (130 aa).

Mg(2+) is bound at residue Asp-78. Cys-79 is a binding site for Zn(2+). Mg(2+) is bound by residues Asp-80 and Asp-82. Zn(2+) contacts are provided by Cys-96 and Cys-103.

The protein belongs to the PRA-CH family. Homodimer. The cofactor is Mg(2+). It depends on Zn(2+) as a cofactor.

The protein localises to the cytoplasm. The catalysed reaction is 1-(5-phospho-beta-D-ribosyl)-5'-AMP + H2O = 1-(5-phospho-beta-D-ribosyl)-5-[(5-phospho-beta-D-ribosylamino)methylideneamino]imidazole-4-carboxamide. Its pathway is amino-acid biosynthesis; L-histidine biosynthesis; L-histidine from 5-phospho-alpha-D-ribose 1-diphosphate: step 3/9. In terms of biological role, catalyzes the hydrolysis of the adenine ring of phosphoribosyl-AMP. The chain is Phosphoribosyl-AMP cyclohydrolase from Nitrosospira multiformis (strain ATCC 25196 / NCIMB 11849 / C 71).